Reading from the N-terminus, the 218-residue chain is Protein-L-isoaspartate O-methyltransferase 1 (218 aa).

S69 is an active-site residue.

Belongs to the methyltransferase superfamily. L-isoaspartyl/D-aspartyl protein methyltransferase family.

Its subcellular location is the cytoplasm. It catalyses the reaction [protein]-L-isoaspartate + S-adenosyl-L-methionine = [protein]-L-isoaspartate alpha-methyl ester + S-adenosyl-L-homocysteine. In terms of biological role, catalyzes the methyl esterification of L-isoaspartyl residues in peptides and proteins that result from spontaneous decomposition of normal L-aspartyl and L-asparaginyl residues. It plays a role in the repair and/or degradation of damaged proteins. The protein is Protein-L-isoaspartate O-methyltransferase 1 of Marinobacter nauticus (strain ATCC 700491 / DSM 11845 / VT8) (Marinobacter aquaeolei).